A 196-amino-acid polypeptide reads, in one-letter code: dTDP-4-dehydro-6-deoxyglucose 3-epimerase (196 aa).

Substrate is bound by residues R21, E26, 45-47 (QVN), and R57. The Proton acceptor role is filled by H60. Substrate contacts are provided by K70 and R117. Y130 functions as the Proton donor in the catalytic mechanism. Substrate contacts are provided by E141 and R166.

This sequence belongs to the dTDP-4-dehydrorhamnose 3,5-epimerase family. In terms of assembly, homodimer.

The catalysed reaction is dTDP-4-dehydro-6-deoxy-alpha-D-glucose = dTDP-4-dehydro-6-deoxy-alpha-D-allose. It participates in antibiotic biosynthesis. Its function is as follows. Involved in the biosynthesis of dTDP-6-deoxy-D-allose, an intermediate in the biosynthesis of mycinose, which is one of the two unusual sugars attached to the 16-membered macrolactone ring of the aglycone antibiotic chalcomycin. Catalyzes the conversion of dTDP-4-oxo-6-deoxyglucose to dTDP-4-oxo-6-deoxyallose, via a C-3 epimerization. In Streptomyces bikiniensis, this protein is dTDP-4-dehydro-6-deoxyglucose 3-epimerase.